We begin with the raw amino-acid sequence, 289 residues long: Pantothenate synthetase (289 aa).

30–37 (MGYLHKGH) provides a ligand contact to ATP. His37 (proton donor) is an active-site residue. Gln61 provides a ligand contact to (R)-pantoate. Gln61 serves as a coordination point for beta-alanine. Residue 147–150 (GEKD) participates in ATP binding. Residue Gln153 participates in (R)-pantoate binding. Residues Val176 and 184–187 (CSSR) each bind ATP.

Belongs to the pantothenate synthetase family. Homodimer.

It is found in the cytoplasm. It catalyses the reaction (R)-pantoate + beta-alanine + ATP = (R)-pantothenate + AMP + diphosphate + H(+). Its pathway is cofactor biosynthesis; (R)-pantothenate biosynthesis; (R)-pantothenate from (R)-pantoate and beta-alanine: step 1/1. In terms of biological role, catalyzes the condensation of pantoate with beta-alanine in an ATP-dependent reaction via a pantoyl-adenylate intermediate. The polypeptide is Pantothenate synthetase (Brucella anthropi (strain ATCC 49188 / DSM 6882 / CCUG 24695 / JCM 21032 / LMG 3331 / NBRC 15819 / NCTC 12168 / Alc 37) (Ochrobactrum anthropi)).